Reading from the N-terminus, the 401-residue chain is Sodium/glutamate symporter (401 aa).

The Periplasmic segment spans residues 1–6 (MFHLDT). The chain crosses the membrane as a helical span at residues 7-24 (LATLVAATLTLLLGRKLV). The Cytoplasmic portion of the chain corresponds to 25-32 (HSVSFLKK). The helical transmembrane segment at 33–52 (YTIPEPVAGGLLVALALLVL) threads the bilayer. The Periplasmic segment spans residues 53–69 (KKSMGWEVNFDMSLRDP). The chain crosses the membrane as a helical span at residues 70–87 (LMLAFFATIGLNANIASL). Residues 88–93 (RAGGRV) are Cytoplasmic-facing. The helical transmembrane segment at 94 to 116 (VGIFLIVVVGLLVMQNAIGIGMA) threads the bilayer. Residues 117–156 (SLLGLDPLMGLLAGSITLSGGHGTGAAWSKLFIERYGFTN) are Periplasmic-facing. Residues 157–179 (ATEVAMACATFGLVLGGLIGGPV) form a helical membrane-spanning segment. Residues 180-212 (ARYLVKHSTTPNGIPDDQEVPTAFEKPDVGRMI) are Cytoplasmic-facing. Residues 213–235 (TSLVLIETIALIAICLTVGKIVA) form a helical membrane-spanning segment. Topologically, residues 236-244 (QLLAGTAFE) are periplasmic. Residues 245–267 (LPTFVCVLFVGVILSNGLSIMGF) traverse the membrane as a helical segment. Over 268 to 276 (YRVFERAVS) the chain is Cytoplasmic. A helical membrane pass occupies residues 277–292 (VLGNVSLSLFLAMALM). Topologically, residues 293 to 301 (GLKLWELAS) are periplasmic. Residues 302-324 (LALPMLAILVVQTIFMALYAIFV) form a helical membrane-spanning segment. Residues 325–367 (TWRMMGKNYDAAVLAAGHCGFGLGATPTAIANMQAITERFGPS) are Cytoplasmic-facing. The chain crosses the membrane as a helical span at residues 368–390 (HMAFLVVPMVGAFFIDIVNALVI). The Periplasmic portion of the chain corresponds to 391 to 401 (KLYLMLPIFAG).

Belongs to the glutamate:Na(+) symporter (ESS) (TC 2.A.27) family.

The protein localises to the cell inner membrane. With respect to regulation, inhibited by the uncoupler carbonylcyanide m-chlorophenylhydrazone (CCCP) and the ionophore monensin. Catalyzes the sodium-dependent, binding-protein-independent transport of glutamate. The polypeptide is Sodium/glutamate symporter (Escherichia coli (strain K12)).